The primary structure comprises 174 residues: Shikimate kinase 2 (174 aa).

ATP is bound at residue 12–17; that stretch reads GAGKTT. Residues Thr16 and Asp32 each coordinate Mg(2+). Substrate is bound by residues Asp34, Arg58, and Gly79. The tract at residues 112–126 is LID domain; it reads MQQPESTQRPSLTGK. Arg120 contacts ATP. Arg139 provides a ligand contact to substrate.

This sequence belongs to the shikimate kinase family. AroL subfamily. In terms of assembly, monomer. It depends on Mg(2+) as a cofactor.

The protein localises to the cytoplasm. It carries out the reaction shikimate + ATP = 3-phosphoshikimate + ADP + H(+). It functions in the pathway metabolic intermediate biosynthesis; chorismate biosynthesis; chorismate from D-erythrose 4-phosphate and phosphoenolpyruvate: step 5/7. In terms of biological role, catalyzes the specific phosphorylation of the 3-hydroxyl group of shikimic acid using ATP as a cosubstrate. The polypeptide is Shikimate kinase 2 (Photorhabdus laumondii subsp. laumondii (strain DSM 15139 / CIP 105565 / TT01) (Photorhabdus luminescens subsp. laumondii)).